The primary structure comprises 367 residues: Peptide chain release factor 2 (367 aa).

N5-methylglutamine is present on glutamine 254.

It belongs to the prokaryotic/mitochondrial release factor family. Post-translationally, methylated by PrmC. Methylation increases the termination efficiency of RF2.

Its subcellular location is the cytoplasm. Functionally, peptide chain release factor 2 directs the termination of translation in response to the peptide chain termination codons UGA and UAA. This Aromatoleum aromaticum (strain DSM 19018 / LMG 30748 / EbN1) (Azoarcus sp. (strain EbN1)) protein is Peptide chain release factor 2.